The sequence spans 89 residues: Small ribosomal subunit protein uS19 (89 aa).

This sequence belongs to the universal ribosomal protein uS19 family.

In terms of biological role, protein S19 forms a complex with S13 that binds strongly to the 16S ribosomal RNA. The polypeptide is Small ribosomal subunit protein uS19 (Xanthomonas campestris pv. campestris (strain 8004)).